The following is a 237-amino-acid chain: 3-oxoacyl-[acyl-carrier-protein] reductase (237 aa).

At M1 the chain carries N-acetylmethionine. Residues 11 to 14, 34 to 35, D56, and 83 to 85 each bind NADP(+); these read SRGI, RN, and AAG. Position 135 (S135) interacts with substrate. NADP(+)-binding positions include Y148, K152, and 181–183; that span reads IHT. Y148 functions as the Proton acceptor in the catalytic mechanism. At K195 the chain carries N6-acetyllysine.

The protein belongs to the short-chain dehydrogenases/reductases (SDR) family. As to quaternary structure, homotetramer (in vitro). Heterotetramer with HSD17B8; contains two molecules each of HSD17B8 and CBR4. Does not form homotetramers when HSD17B8 is coexpressed, only heterotetramers (in vitro).

It localises to the mitochondrion matrix. The catalysed reaction is a (3R)-hydroxyacyl-[ACP] + NADP(+) = a 3-oxoacyl-[ACP] + NADPH + H(+). It carries out the reaction a quinone + NADPH + H(+) = a quinol + NADP(+). The protein operates within lipid metabolism; fatty acid biosynthesis. Its function is as follows. Component of the heterotetramer complex KAR (3-ketoacyl-[acyl carrier protein] reductase or 3-ketoacyl-[ACP] reductase) that forms part of the mitochondrial fatty acid synthase (mtFAS). Beta-subunit of the KAR heterotetramer complex, responsible for the 3-ketoacyl-ACP reductase activity of the mtFAS, reduces 3-oxoacyl-[ACP] to (3R)-hydroxyacyl-[ACP] in a NADPH-dependent manner with no chain length preference, thereby participating in mitochondrial fatty acid biosynthesis. The homotetramer has NADPH-dependent quinone reductase activity (in vitro), hence could play a role in protection against cytotoxicity of exogenous quinones. As a heterotetramer, it can also reduce 9,10-phenanthrenequinone, 1,4-benzoquinone and various other o-quinones and p-quinones (in vitro). The protein is 3-oxoacyl-[acyl-carrier-protein] reductase (CBR4) of Bos taurus (Bovine).